Consider the following 244-residue polypeptide: ATP synthase subunit a, chloroplastic (244 aa).

A run of 5 helical transmembrane segments spans residues 35–55 (QVLI…VIAV), 92–112 (VPFI…GALL), 131–151 (INTT…AGLS), 196–216 (LVVV…VMFL), and 217–237 (GLFI…AYIG).

The protein belongs to the ATPase A chain family. As to quaternary structure, F-type ATPases have 2 components, CF(1) - the catalytic core - and CF(0) - the membrane proton channel. CF(1) has five subunits: alpha(3), beta(3), gamma(1), delta(1), epsilon(1). CF(0) has four main subunits: a, b, b' and c.

The protein resides in the plastid. It is found in the chloroplast thylakoid membrane. In terms of biological role, key component of the proton channel; it plays a direct role in the translocation of protons across the membrane. This is ATP synthase subunit a, chloroplastic from Gossypium barbadense (Sea Island cotton).